The following is a 254-amino-acid chain: 5-oxoprolinase subunit A (254 aa).

It belongs to the LamB/PxpA family. In terms of assembly, forms a complex composed of PxpA, PxpB and PxpC.

It carries out the reaction 5-oxo-L-proline + ATP + 2 H2O = L-glutamate + ADP + phosphate + H(+). Catalyzes the cleavage of 5-oxoproline to form L-glutamate coupled to the hydrolysis of ATP to ADP and inorganic phosphate. This Acinetobacter baumannii (strain ACICU) protein is 5-oxoprolinase subunit A.